Reading from the N-terminus, the 906-residue chain is Centromere protein C (906 aa).

Composition is skewed to polar residues over residues 56–74 (SLTS…SSSK) and 87–96 (SSRTGEASLQ). Disordered regions lie at residues 56–115 (SLTS…NEVH) and 141–169 (QKAA…NKNI). 2 positions are modified to phosphoserine: Ser71 and Ser94. Over residues 97–108 (ASAEPSEAAGGS) the composition is skewed to low complexity. Residues Lys150 and Lys182 each participate in a glycyl lysine isopeptide (Lys-Gly) (interchain with G-Cter in SUMO2) cross-link. The disordered stretch occupies residues 197–224 (VEDNLSKGQEGTSSEITQKRDDLSSDVQ). Residues 202–212 (SKGQEGTSSEI) show a composition bias toward polar residues. The Nuclear localization signal signature appears at 228–242 (KKNFSELFLETVKRK). Glycyl lysine isopeptide (Lys-Gly) (interchain with G-Cter in SUMO2) cross-links involve residues Lys229, Lys240, Lys242, and Lys266. Disordered regions lie at residues 294–320 (RHLS…KSHS), 341–596 (AQLS…SLAI), and 623–671 (EYTS…EQDQ). Phosphoserine occurs at positions 302, 344, 363, and 404. The span at 402-424 (GQSSWENSNVSNTGQDKLQINSK) shows a compositional bias: polar residues. Residues 426-450 (NMKDCEEVRNEPNPKKQKPALENKK) are compositionally biased toward basic and acidic residues. Residues 449-466 (KKKTNSTQTNKEKSGKKF) carry the Nuclear localization signal motif. Residues 465-474 (KFFSGGSKNK) are compositionally biased toward low complexity. Positions 481 to 494 (TLTSRRSCRISQRP) are enriched in polar residues. At Ser495 the chain carries Phosphoserine. Positions 496–512 (EWWRVKSDESSVDRNPS) are enriched in basic and acidic residues. Lys501 is covalently cross-linked (Glycyl lysine isopeptide (Lys-Gly) (interchain with G-Cter in SUMO2)). Residue Ser505 is modified to Phosphoserine. Over residues 523 to 546 (NKKKQTKRNHVSKRAGKKPGSSKR) the composition is skewed to basic residues. A Nuclear localization signal motif is present at residues 525–540 (KKQTKRNHVSKRAGKK). The span at 626–637 (SKTQMESASNSE) shows a compositional bias: polar residues. Lys640 is covalently cross-linked (Glycyl lysine isopeptide (Lys-Gly) (interchain with G-Cter in SUMO2)). Phosphoserine is present on residues Ser647 and Ser673. Lys692 participates in a covalent cross-link: Glycyl lysine isopeptide (Lys-Gly) (interchain with G-Cter in SUMO2). The segment at 702-724 (VRRSNRIRLKPLEYWRGERVDYQ) is MIF2 homology domain II. 2 positions are modified to phosphoserine: Ser728 and Ser737. Positions 744–762 (KIKAQRNLGKVNKKVTKKP) match the Nuclear localization signal motif. Residue Lys770 forms a Glycyl lysine isopeptide (Lys-Gly) (interchain with G-Cter in SUMO2) linkage. Positions 853–906 (LVFYVNFGDLLCTLHETPYKLTTGDSFYVPSGNHYNIKNLLNVESSLLFTQIKR) are MIF2 homology domain III.

The protein belongs to the CENP-C/MIF2 family. As to quaternary structure, oligomer. Component of the CENPA-NAC complex, at least composed of CENPA, CENPC, CENPH, CENPM, CENPN, CENPT and CENPU. The CENPA-NAC complex interacts with the CENPA-CAD complex, composed of CENPI, CENPK, CENPL, CENPO, CENPP, CENPQ, CENPR and CENPS. Binds to DAXX. Interacts with DNMT3B. Interacts directly with CENPA. Identified in a centromere complex containing histones H2A, H2B and H4, and at least CENPA, CENPB, CENPC, CENPT, CENPN, HJURP, SUPT16H, SSRP1 and RSF1. Interacts with MEIKIN.

Its subcellular location is the nucleus. The protein localises to the chromosome. The protein resides in the centromere. It is found in the kinetochore. Its function is as follows. Component of the CENPA-NAC (nucleosome-associated) complex, a complex that plays a central role in assembly of kinetochore proteins, mitotic progression and chromosome segregation. The CENPA-NAC complex recruits the CENPA-CAD (nucleosome distal) complex and may be involved in incorporation of newly synthesized CENPA into centromeres. CENPC recruits DNA methylation and DNMT3B to both centromeric and pericentromeric satellite repeats and regulates the histone code in these regions. This is Centromere protein C (Cenpc) from Mus musculus (Mouse).